The sequence spans 115 residues: Evasin P1181 (115 aa).

A signal peptide spans 1 to 25; that stretch reads MALNWSFRVIFVSAMWCALLKFATL. Intrachain disulfides connect Cys38-Cys58, Cys54-Cys94, Cys70-Cys99, and Cys89-Cys108. Asn45, Asn72, and Asn103 each carry an N-linked (GlcNAc...) asparagine glycan.

It localises to the secreted. Its function is as follows. Salivary chemokine-binding protein which binds to host chemokines CCL3 and CCL4. The sequence is that of Evasin P1181 from Amblyomma maculatum (Gulf Coast tick).